The following is a 132-amino-acid chain: MGRDTISNILTSIRNADMNKKETVRIPSTNIIESIVRILLREGFIENVRKHQENNKNFLVSTLRHRRNRTGTYRNILKRISRPGLRIYSNSQRIPRILGGMGIVILSTSRGIMTDREARLEGIGGEILCSIW.

The protein belongs to the universal ribosomal protein uS8 family. As to quaternary structure, part of the 30S ribosomal subunit.

It localises to the plastid. The protein resides in the chloroplast. Functionally, one of the primary rRNA binding proteins, it binds directly to 16S rRNA central domain where it helps coordinate assembly of the platform of the 30S subunit. This is Small ribosomal subunit protein uS8c (rps8) from Ceratophyllum demersum (Rigid hornwort).